Consider the following 2579-residue polypeptide: MAEAVKPQRRAKAKASRTKTKEKKKYETPQREESSEVSLPKTSREQEIPSLACEFKGDHLKVVTDSQLQDDASGQNESEMFDVPLTSLTISNEESLTCNTEPPKEGGEARPCVGDSAVTPKVHPGDNVGTKVETPKNFTEVEENMSVQGGLSESAPQSNFSYTQPAMENIQVRETQNSKEDKQGLVCSSEVPQNVGLQSSCPAKHGFQTPRVKKLYPQLPAEIAGEAPALVAVKPLLRSERLYPELPSQLELVPFTKEQLKILEPGSWLENVESYLEEFDSMAHQDRHEFYELLLNYSRCRKQLLLAEAELLTLTSDCQNAKSRLWQFKEEQMSVQGICADQVKVFSYHRYQRVEMNENALVELKKLFDAKSEHLHQTLALHSYTSVLSRLQVESYIYALLSSSAVLRSSAIHQQGRASKQTESIPSDLCQLKECISVLFMFTRRVNEDTQFHDDILLWLQKLVSVLQRVGCPGDHLFLLNHILRCPAGVSKWAVPFIQIKVLHNPSGVFHFMQSLALLMSPVKNRAEFMCHMKPSERKPSSSGPGSGTWTLVDEGGEEDEDPETSWILLNEDDLVTILAQFPFHELFQHLLGFKAKGDYLPETTRPQEMMKIFAFANSLVELLAVGLETFNRARYRQFVKRIGYMIRMTLGYVSDHWAQYVSHNQGSGLAQQPYSMEKLQVEFDELFLRAVLHVLKAKRLGIWLFMSEMPFGTLSVQMLWKLFYLMHQVESENLQQLSSSLQPAQCKQQLQDPEHFTNFEKCLSSMNSSEEICLLTTFAQMAQARRTNVDEDFIKIIVLEIYEVSYVTLSTRETFSKVGRELLGTITAVHPEIISVLLDRVQETIDQVGMVSLYLFKELPLYLWQPSASEIAVIRDWLLNYNLTVVKNKLACVILEGLNWGFAKQATLHLDQAVHAEVALMVLEAYQKYLAQKPYAGILSESMKQVSYLASIVRYGETPETSFNQWAWNLILRLKLHKNDYGIQPNCPAVPFSVTVPDMTESPTFHPLLKAVKAGMPIGCYLALSMTAVGHSIEKFCAEGIPLLGILVQSRHLRTVVHVLDKILPLFYPCQYYLLKNEQFLSHLLLFLHLDSGVPQGVTQQVTHKVAQHLTGASHGDNVKLLNSMIQAHISVSTQPNEVGPVAVLEFWVQALISQHLWYREQPILFLMDHLCKAAFQLMQEDCIQKLLYQQHKNALGYHCDRSLLSSLVSWIVAGNITPSFVEGLATPTQVWFAWTVLNMESIFEEDSQLRRVIEGELVINSAFTPDQALKKAQTQLKLPIVPSLQRLLIYRWAHQALVTPSDHPLLPLIWQKFFLLYLHRPGPQYGLPIDGCIGRRFFQSPAHINLLKEMKRRLTEVADFHHAASKALRVPAEGSEGLPESHSGTPGYLTSPELHKELVRLFNVYILWLEDENFQKGDTYIPSLPKHYDIHRLAKVMQNQQDLWMEYLNMERIYHEFQETVGLWTQAKLESHSTPCSLSVQLDFTDPLLAKERVLSNLRKHEAPQPPLALHPTKPPVPVISSAVLLSQKDATQLVCTDLNLLQQQARTAALRESQQVALDGELLDTMPKQYVNREEQTTLHLECRGSSGKKCQGAAVVTVQFEGMHKNEAISQQLHVLRKEVKQLQAEAAKPPSLNIVEAAVHAENLITALVNAYKLQPTPGIQKVGISLFFTIVDYVSDETQRHPPTRQFFTSCIEILGQVFISGIKSECRKVLETILKNSRLCSLLSPFFTPNAAPAEFIQLYEQVVKFLSEDNSDMIFMLLTKFDLKQWLSATKPPLSDRTRLLESIHLALTAWGLEPDEDILMPFNLFCKHWTYLLLYQFPDQYSDILRLLMQSSAEQLLSPECWKATLRALGCCAPSCQQGAASTEGAVLPSSSDALLSDKQVMETIQWLSDFFYKLRLSKMDFKSFGLFSKWSPYMADVKTFLGYLVKRLIDLEMTCLAQDPTASRKTVLKSLHSVIIQLFKPWILVLEDNESSQQRHYPWLESDTVVASSIVQLFTDCIDSLHESFKDKLLPGDAGALWLHLMHYCEACTAPKMPEFILYAFHSTYRKLPWKDLHPDQMLMEAFFKVERGSPKSCFLFLGSVLCEVNWVSVLSDAWNSSPHPETRSMIVCLLFMMILLAKEVQLVDQTDSPLLSLLGQTSSLSWHLVDIVSYQSVLSYFSSHYPPSIILAKESYAELIMKLLKVSAGLSIPTDSQKHLDAVPKCQAFTHQMVQFLSTLEQNGKITLAVLEQEMSKLLDDIIVFNPPDMDSQTRHMALSSLFMEVLMMMNNATIPTAEFLRGSIRTWIGQKMHGLVVLPLLTAACQSLASVRHMAETTEACITAYFKESPLNQNSGWGPILVSLQVPELTMEEFLQECLTLGSYLTLYVYLLQCLNSEQTLRNEMKVLLILSKWLEQVYPSSVEEEAKLFLWWHQVLQLSLIQTEQNDSVLTESVIRILLLVQSRQNLVAEERLSSGILGAIGFGRKSPLSNRFRVVARSMAAFLSVQVPMEDQIRLRPGSELHLTPKAQQALNALESMASSKQYVEYQDQILQATQFIRHPGHCLQDGKSFLALLVNCLYPEVHYLDHIR.

Disordered stretches follow at residues 1 to 46 and 92 to 132; these read MAEA…SREQ and NEES…GTKV. The segment covering 7 to 23 has biased composition (basic residues); the sequence is PQRRAKAKASRTKTKEK. Basic and acidic residues predominate over residues 24-34; sequence KKYETPQREES. Residue Thr-134 is modified to Phosphothreonine. The disordered stretch occupies residues 535-564; the sequence is PSERKPSSSGPGSGTWTLVDEGGEEDEDPE. A compositionally biased stretch (acidic residues) spans 555–564; the sequence is EGGEEDEDPE. Positions 1607-1633 form a coiled coil; it reads MHKNEAISQQLHVLRKEVKQLQAEAAK.

It belongs to the EPG5 family. As to quaternary structure, interacts with RAN.

The protein resides in the cytoplasm. It localises to the perinuclear region. Its subcellular location is the lysosome. Involved in autophagy. May play a role in a late step of autophagy, such as clearance of autophagosomal cargo. Plays a key role in innate and adaptive immune response triggered by unmethylated cytidine-phosphate-guanosine (CpG) dinucleotides from pathogens, and mediated by the nucleotide-sensing receptor TLR9. It is necessary for the translocation of CpG dinucleotides from early endosomes to late endosomes and lysosomes, where TLR9 is located. The protein is Ectopic P granules protein 5 homolog (EPG5) of Homo sapiens (Human).